A 191-amino-acid chain; its full sequence is Large ribosomal subunit protein uL3 (191 aa).

The disordered stretch occupies residues 119 to 138; sequence AAHGSRFHRRPGSIGNREWP.

This sequence belongs to the universal ribosomal protein uL3 family. In terms of assembly, part of the 50S ribosomal subunit. Forms a cluster with proteins L14 and L19.

One of the primary rRNA binding proteins, it binds directly near the 3'-end of the 23S rRNA, where it nucleates assembly of the 50S subunit. The polypeptide is Large ribosomal subunit protein uL3 (rplC) (Helicobacter pylori (strain ATCC 700392 / 26695) (Campylobacter pylori)).